Reading from the N-terminus, the 403-residue chain is Probable tRNA sulfurtransferase (403 aa).

The THUMP domain maps to 60–165 (KLAEERLKPI…KEGVFLSCRT (106 aa)). ATP is bound by residues 183-184 (ML), 208-209 (HF), Arg265, Gly287, and Gln296.

The protein belongs to the ThiI family.

It is found in the cytoplasm. The enzyme catalyses [ThiI sulfur-carrier protein]-S-sulfanyl-L-cysteine + a uridine in tRNA + 2 reduced [2Fe-2S]-[ferredoxin] + ATP + H(+) = [ThiI sulfur-carrier protein]-L-cysteine + a 4-thiouridine in tRNA + 2 oxidized [2Fe-2S]-[ferredoxin] + AMP + diphosphate. The catalysed reaction is [ThiS sulfur-carrier protein]-C-terminal Gly-Gly-AMP + S-sulfanyl-L-cysteinyl-[cysteine desulfurase] + AH2 = [ThiS sulfur-carrier protein]-C-terminal-Gly-aminoethanethioate + L-cysteinyl-[cysteine desulfurase] + A + AMP + 2 H(+). The protein operates within cofactor biosynthesis; thiamine diphosphate biosynthesis. Functionally, catalyzes the ATP-dependent transfer of a sulfur to tRNA to produce 4-thiouridine in position 8 of tRNAs, which functions as a near-UV photosensor. Also catalyzes the transfer of sulfur to the sulfur carrier protein ThiS, forming ThiS-thiocarboxylate. This is a step in the synthesis of thiazole, in the thiamine biosynthesis pathway. The sulfur is donated as persulfide by IscS. This chain is Probable tRNA sulfurtransferase, found in Listeria welshimeri serovar 6b (strain ATCC 35897 / DSM 20650 / CCUG 15529 / CIP 8149 / NCTC 11857 / SLCC 5334 / V8).